We begin with the raw amino-acid sequence, 353 residues long: B1 bradykinin receptor (353 aa).

The Extracellular portion of the chain corresponds to 1–41; sequence MASQTLVVFQASNQSQLPPPNATLCDGAQEAWHLLHKVLPT. N-linked (GlcNAc...) asparagine glycans are attached at residues Asn13 and Asn21. The helical transmembrane segment at 42-62 threads the bilayer; sequence CVVAICSGGLLGNLFVLSVFL. Residues 63–72 lie on the Cytoplasmic side of the membrane; the sequence is VPRRRLNAAE. Residues 73–93 form a helical membrane-spanning segment; sequence IYLAHLAASDLVFALGLPFWA. Residues 94–110 are Extracellular-facing; that stretch reads ETIRNGFHWPFGAPLCR. A disulfide bond links Cys109 and Cys189. A helical transmembrane segment spans residues 111 to 131; sequence VVNGVIKANLFISIFLVVAIS. At 132–154 the chain is on the cytoplasmic side; it reads RDRYRALVHPVASWRRRRRRHWA. Residues 155 to 175 traverse the membrane as a helical segment; it reads QATCVLIWTAGGLLSIPTFLL. The Extracellular portion of the chain corresponds to 176-207; the sequence is RSVQVVPELNVSACVLPFPHEAWAFVRTVELN. Asn185 is a glycosylation site (N-linked (GlcNAc...) asparagine). The chain crosses the membrane as a helical span at residues 208 to 228; sequence VLGFLLPLAAILFFNYHILAA. Topologically, residues 229-251 are cytoplasmic; the sequence is LRGREQLSRTRCGGPRDGKTTAL. The helical transmembrane segment at 252 to 272 threads the bilayer; the sequence is ILTLVAVFLLCWTPYHVCAFL. Residues 273–295 lie on the Extracellular side of the membrane; the sequence is EFLLHVRAIRGCFWEDFTDLGLQ. A helical transmembrane segment spans residues 296–316; that stretch reads YTNFFAFINSCLNPVIYVFWG. Topologically, residues 317 to 353 are cytoplasmic; the sequence is QLFRTKIWELYHRCLPRKLTAVSSSRRKEIFQIFWRN. Residue Cys330 is the site of S-palmitoyl cysteine attachment.

The protein belongs to the G-protein coupled receptor 1 family. Bradykinin receptor subfamily. BDKRB1 sub-subfamily.

The protein localises to the cell membrane. In terms of biological role, this is a receptor for bradykinin. Could be a factor in chronic pain and inflammation. The polypeptide is B1 bradykinin receptor (BDKRB1) (Sus scrofa (Pig)).